The chain runs to 158 residues: Snaclec coagulation factor X-activating enzyme light chain 2 (158 aa).

The first 23 residues, 1–23 (MGRSISVSFGLLAVFLSLSGTGA), serve as a signal peptide directing secretion. 3 disulfides stabilise this stretch: Cys27-Cys38, Cys55-Cys152, and Cys127-Cys144. The 120-residue stretch at 34 to 153 (YRYFCYRVFK…CEEPYPFVCK (120 aa)) folds into the C-type lectin domain.

It belongs to the snaclec family. In terms of assembly, heterotrimer; disulfide-linked. The heterotrimer consists of 1 heavy chain (a metalloproteinase) and 2 light chains: LC1 and LC2. As to expression, expressed by the venom gland.

It localises to the secreted. In terms of biological role, regulatory subunit of the blood coagulation factor X-activating enzyme. Activates coagulation factor X (F10) by cleaving the Arg-Ile bond at position 234, activates coagulation factor IX (F9) by cleaving the Arg-Val bond at position 226 and is also able to activate protein C (PROC). May serve as an exosite by which the enzyme recognizes and binds to the Gla domain of factor X (F10) in a calcium-dependent manner. The polypeptide is Snaclec coagulation factor X-activating enzyme light chain 2 (LC2) (Macrovipera lebetinus (Levantine viper)).